Reading from the N-terminus, the 1180-residue chain is Protocadherin-12 (1180 aa).

Positions 1–17 (MMLLLPFLLGLLGPGSY) are cleaved as a signal peptide. Over 18–716 (LFISGDCQEV…HEPGVLSTPA (699 aa)) the chain is Extracellular. 5 consecutive Cadherin domains span residues 28–135 (ATVM…QPQF), 136–244 (PKDE…SPVF), 245–352 (AESS…APSI), 355–460 (TWAS…APVF), and 461–565 (EKSR…APEV). N-linked (GlcNAc...) asparagine glycosylation is found at asparagine 265 and asparagine 415. N-linked (GlcNAc...) asparagine glycosylation is found at asparagine 582, asparagine 659, and asparagine 662. The 112-residue stretch at 600-711 (PAGTGIPPKA…LRDSAHEPGV (112 aa)) folds into the Cadherin 6 domain. The chain crosses the membrane as a helical span at residues 717–737 (LALICLAVLLAIFGLLLALFV). The Cytoplasmic segment spans residues 738-1180 (SICRTERKDN…ESRLGCGRNL (443 aa)). 2 disordered regions span residues 857 to 930 (NASR…GPHQ) and 973 to 1026 (QFQP…PEED). Serine 859 bears the Phosphoserine mark. Positions 904–918 (PASSATLRRQRNFNG) are enriched in polar residues. Residues 1014-1026 (PDLEEGPPSPEED) show a composition bias toward acidic residues. The residue at position 1064 (serine 1064) is a Phosphoserine. Residues 1076-1093 (SSPDATTSEEPRTFQTFG) are compositionally biased toward polar residues. Disordered regions lie at residues 1076-1104 (SSPDATTSEEPRTFQTFGKTVGPGPELSP) and 1156-1180 (SGASASEAQGRKKAAESRLGCGRNL).

Post-translationally, N-glycosylated. In terms of processing, cleaved by ADAM10 close to the transmembrane domain to release the Protocadherin-12, secreted form in the serum. Cleavage results in reduced cellular adhesion in a cell migration assay. In terms of tissue distribution, expressed in endothelial cells: localizes in vasculogenic rather than angiogenic endothelium. Strongly expressed in a subset of invasive cells of the placenta, named glycogen-rich trophoblasts cells (at protein level). glycogen-rich trophoblasts cells originate from the from the ectoplacental cone where they rapidly form tight islets (at protein level). In adult mice, present at high level in mesangial cells of kidney glomeruli, while expression was not detected in other types of perivascular cells.

The protein localises to the cell membrane. It is found in the cell junction. The protein resides in the secreted. Cellular adhesion molecule that may play an important role in cell-cell interactions at interendothelial junctions. Acts as a regulator of cell migration, probably via increasing cell-cell adhesion. Promotes homotypic calcium-dependent aggregation and adhesion and clusters at intercellular junctions. Unable to bind to catenins, weakly associates with the cytoskeleton. The chain is Protocadherin-12 from Mus musculus (Mouse).